Reading from the N-terminus, the 66-residue chain is Conotoxin mr5.2 (66 aa).

The first 19 residues, 1–19 (MRCVPVFVILLLLIASAPT), serve as a signal peptide directing secretion. Positions 20 to 48 (VDAQLKTKDDMPLASFHANVKRTLQILRD) are excised as a propeptide. 4-carboxyglutamate is present on residues Glu57 and Glu61. Asn65 carries the asparagine amide modification.

Contains 2 disulfide bonds that can be either 'C1-C3, C2-C4' or 'C1-C4, C2-C3', since these disulfide connectivities have been observed for conotoxins with cysteine framework V (for examples, see AC P0DQQ7 and AC P81755). In terms of tissue distribution, expressed by the venom duct.

Its subcellular location is the secreted. The protein is Conotoxin mr5.2 of Conus marmoreus (Marble cone).